Consider the following 509-residue polypeptide: Tyrosine-protein kinase STK (509 aa).

The span at 1 to 16 shows a compositional bias: polar residues; the sequence is MGPCCSKQTKALNNQP. The disordered stretch occupies residues 1 to 23; sequence MGPCCSKQTKALNNQPDKSKSKD. Gly2 carries N-myristoyl glycine lipidation. Positions 59 to 120 constitute an SH3 domain; sequence PGVTIFVALY…PSTYVAPEKS (62 aa). The region spanning 126-218 is the SH2 domain; the sequence is WYFGDVKRAE…GLVCALTLPC (93 aa). Residues 240 to 495 form the Protein kinase domain; it reads LRLNRKLGAG…LQGVLEDYFV (256 aa). ATP-binding positions include 246-254 and Lys268; that span reads LGAGQFGEV. Asp360 acts as the Proton acceptor in catalysis. Residue Tyr390 is modified to Phosphotyrosine; by autocatalysis.

Belongs to the protein kinase superfamily. Tyr protein kinase family. SRC subfamily.

The catalysed reaction is L-tyrosyl-[protein] + ATP = O-phospho-L-tyrosyl-[protein] + ADP + H(+). This chain is Tyrosine-protein kinase STK (STK), found in Hydra vulgaris (Hydra).